Here is a 156-residue protein sequence, read N- to C-terminus: Small ribosomal subunit protein uS7 (156 aa).

Belongs to the universal ribosomal protein uS7 family. Part of the 30S ribosomal subunit. Contacts proteins S9 and S11.

Functionally, one of the primary rRNA binding proteins, it binds directly to 16S rRNA where it nucleates assembly of the head domain of the 30S subunit. Is located at the subunit interface close to the decoding center, probably blocks exit of the E-site tRNA. In Hamiltonella defensa subsp. Acyrthosiphon pisum (strain 5AT), this protein is Small ribosomal subunit protein uS7.